The following is a 226-amino-acid chain: Pathogenesis-related protein R minor form (226 aa).

An N-terminal signal peptide occupies residues 1 to 25 (MNFLKSFPFYAFLCFGQYFVAVTHA). Intrachain disulfides connect Cys-34-Cys-225, Cys-75-Cys-85, Cys-90-Cys-96, Cys-140-Cys-214, Cys-145-Cys-197, Cys-153-Cys-163, Cys-167-Cys-176, and Cys-177-Cys-184.

This sequence belongs to the thaumatin family.

The protein resides in the vacuole. The chain is Pathogenesis-related protein R minor form from Nicotiana tabacum (Common tobacco).